Reading from the N-terminus, the 549-residue chain is Probable protein kinase UbiB (549 aa).

Positions 123–501 (DFNETPLASA…QQQAHKSNYL (379 aa)) constitute a Protein kinase domain. ATP contacts are provided by residues 129 to 137 (LASASISQV) and K152. D287 functions as the Proton acceptor in the catalytic mechanism. Helical transmembrane passes span 498–518 (SNYL…LFNQ) and 520–540 (ATLL…IIGW).

It belongs to the ABC1 family. UbiB subfamily.

The protein resides in the cell inner membrane. It functions in the pathway cofactor biosynthesis; ubiquinone biosynthesis [regulation]. Is probably a protein kinase regulator of UbiI activity which is involved in aerobic coenzyme Q (ubiquinone) biosynthesis. This Shewanella oneidensis (strain ATCC 700550 / JCM 31522 / CIP 106686 / LMG 19005 / NCIMB 14063 / MR-1) protein is Probable protein kinase UbiB.